Reading from the N-terminus, the 299-residue chain is Hydrogenase maturation factor HypB (299 aa).

Residues Cys2, Cys5, and Cys7 each contribute to the Ni(2+) site. The tract at residues 18-57 (EVGDDGHGHHHHDGHHDHDHDHDHHRGDHEHDDHHHAEDG) is disordered. The span at 31–57 (GHHDHDHDHDHHRGDHEHDDHHHAEDG) shows a compositional bias: basic and acidic residues. Residues 107 to 268 (ALNFVSSPGS…LRVNPRLQTL (162 aa)) are G-domain. The Ni(2+) site is built by Cys167, His168, and Cys199. 3 residues coordinate Zn(2+): Cys167, His168, and Cys199.

This sequence belongs to the SIMIBI class G3E GTPase family. HypB/HupM subfamily.

Involved in the maturation of [NiFe] hydrogenases. Required for nickel insertion into the metal center of the hydrogenase. Exhibits a low intrinsic GTPase activity, which is essential for nickel insertion. Is able to bind 4 nickel ions per subunit. Can also bind zinc. The chain is Hydrogenase maturation factor HypB from Rhizobium leguminosarum bv. viciae.